The following is a 120-amino-acid chain: U13-lycotoxin-Ls1f (120 aa).

The signal sequence occupies residues M1–C16. A propeptide spanning residues F17–R54 is cleaved from the precursor. 4 disulfides stabilise this stretch: C56–C70, C63–C76, C69–C87, and C78–C85. Residues C56–C95 enclose the Agouti domain.

This sequence belongs to the neurotoxin 05 (agouti) family. In terms of processing, contains 6 disulfide bonds. As to expression, expressed by the venom gland.

It localises to the secreted. This Lycosa singoriensis (Wolf spider) protein is U13-lycotoxin-Ls1f.